A 207-amino-acid chain; its full sequence is rRNA N(6)-adenosine-methyltransferase METTL5 (207 aa).

Residues Gln-25, Thr-28, Gly-56, Cys-59, Val-61, Asp-78, and 105-106 contribute to the S-adenosyl-L-methionine site; that span reads DV.

Belongs to the methyltransferase superfamily. PrmA family.

Its subcellular location is the nucleus. It localises to the presynapse. It is found in the postsynapse. The catalysed reaction is adenosine(1832) in 18S rRNA + S-adenosyl-L-methionine = N(6)-methyladenosine(1832) in 18S rRNA + S-adenosyl-L-homocysteine + H(+). With respect to regulation, rRNA N6-adenosine-methyltransferase activity is inhibited by zinc. Its function is as follows. Catalytic subunit of a heterodimer with TRMT112, which specifically methylates the 6th position of adenine in position 1832 of 18S rRNA. N6-methylation of adenine(1832) in 18S rRNA resides in the decoding center of 18S rRNA and is required for translation and embryonic stem cells (ESCs) pluripotency and differentiation. This Danio rerio (Zebrafish) protein is rRNA N(6)-adenosine-methyltransferase METTL5.